The following is an 86-amino-acid chain: MSQEDKQRITVEIYNRKYHIVGEESERHMQLVADLVDQKMNEIHEVNKQLDTSSLAVLTAVNTMNDYLKLKEDYATLLGSIKKKED.

The protein belongs to the ZapA family. Type 2 subfamily. Homodimer. Interacts with FtsZ.

It is found in the cytoplasm. Its function is as follows. Activator of cell division through the inhibition of FtsZ GTPase activity, therefore promoting FtsZ assembly into bundles of protofilaments necessary for the formation of the division Z ring. It is recruited early at mid-cell but it is not essential for cell division. In Oceanobacillus iheyensis (strain DSM 14371 / CIP 107618 / JCM 11309 / KCTC 3954 / HTE831), this protein is Cell division protein ZapA.